The following is a 131-amino-acid chain: Large ribosomal subunit protein bL17 (131 aa).

Belongs to the bacterial ribosomal protein bL17 family. As to quaternary structure, part of the 50S ribosomal subunit. Contacts protein L32.

The polypeptide is Large ribosomal subunit protein bL17 (Burkholderia mallei (strain NCTC 10229)).